A 343-amino-acid chain; its full sequence is N-acetyl-gamma-glutamyl-phosphate reductase (343 aa).

Residue cysteine 148 is part of the active site.

Belongs to the NAGSA dehydrogenase family. Type 1 subfamily.

The protein resides in the cytoplasm. The catalysed reaction is N-acetyl-L-glutamate 5-semialdehyde + phosphate + NADP(+) = N-acetyl-L-glutamyl 5-phosphate + NADPH + H(+). It participates in amino-acid biosynthesis; L-arginine biosynthesis; N(2)-acetyl-L-ornithine from L-glutamate: step 3/4. Catalyzes the NADPH-dependent reduction of N-acetyl-5-glutamyl phosphate to yield N-acetyl-L-glutamate 5-semialdehyde. In Caldicellulosiruptor bescii (strain ATCC BAA-1888 / DSM 6725 / KCTC 15123 / Z-1320) (Anaerocellum thermophilum), this protein is N-acetyl-gamma-glutamyl-phosphate reductase.